We begin with the raw amino-acid sequence, 479 residues long: Ribulose bisphosphate carboxylase large chain (479 aa).

Residues 1–2 (MS) constitute a propeptide that is removed on maturation. Residues N123 and T173 each coordinate substrate. K175 serves as the catalytic Proton acceptor. Residue K177 coordinates substrate. Mg(2+)-binding residues include K201, D203, and E204. K201 carries the post-translational modification N6-carboxylysine. Position 208 is a phosphoserine (S208). H294 (proton acceptor) is an active-site residue. 2 residues coordinate substrate: R295 and H327. Residue T330 is modified to Phosphothreonine. Residue S379 participates in substrate binding.

Belongs to the RuBisCO large chain family. Type I subfamily. Heterohexadecamer of 8 large chains and 8 small chains; disulfide-linked. The disulfide link is formed within the large subunit homodimers. Mg(2+) is required as a cofactor. The disulfide bond which can form in the large chain dimeric partners within the hexadecamer appears to be associated with oxidative stress and protein turnover.

The protein localises to the plastid. It is found in the chloroplast. It carries out the reaction 2 (2R)-3-phosphoglycerate + 2 H(+) = D-ribulose 1,5-bisphosphate + CO2 + H2O. It catalyses the reaction D-ribulose 1,5-bisphosphate + O2 = 2-phosphoglycolate + (2R)-3-phosphoglycerate + 2 H(+). In terms of biological role, ruBisCO catalyzes two reactions: the carboxylation of D-ribulose 1,5-bisphosphate, the primary event in carbon dioxide fixation, as well as the oxidative fragmentation of the pentose substrate in the photorespiration process. Both reactions occur simultaneously and in competition at the same active site. This Olimarabidopsis pumila (Dwarf rocket) protein is Ribulose bisphosphate carboxylase large chain.